The sequence spans 406 residues: Phosphopentomutase (406 aa).

The Mn(2+) site is built by D10, D305, H310, D346, H347, and H358.

Belongs to the phosphopentomutase family. It depends on Mn(2+) as a cofactor.

The protein localises to the cytoplasm. It carries out the reaction 2-deoxy-alpha-D-ribose 1-phosphate = 2-deoxy-D-ribose 5-phosphate. The enzyme catalyses alpha-D-ribose 1-phosphate = D-ribose 5-phosphate. It participates in carbohydrate degradation; 2-deoxy-D-ribose 1-phosphate degradation; D-glyceraldehyde 3-phosphate and acetaldehyde from 2-deoxy-alpha-D-ribose 1-phosphate: step 1/2. In terms of biological role, isomerase that catalyzes the conversion of deoxy-ribose 1-phosphate (dRib-1-P) and ribose 1-phosphate (Rib-1-P) to deoxy-ribose 5-phosphate (dRib-5-P) and ribose 5-phosphate (Rib-5-P), respectively. The sequence is that of Phosphopentomutase from Agrobacterium fabrum (strain C58 / ATCC 33970) (Agrobacterium tumefaciens (strain C58)).